We begin with the raw amino-acid sequence, 320 residues long: ATP-dependent 6-phosphofructokinase (320 aa).

An ATP-binding site is contributed by Gly12. 22–26 is an ADP binding site; sequence RGVVR. ATP-binding positions include 73-74 and 103-106; these read RF and GDGS. Asp104 contributes to the Mg(2+) binding site. 126 to 128 serves as a coordination point for substrate; sequence TID. Catalysis depends on Asp128, which acts as the Proton acceptor. ADP is bound at residue Arg155. Substrate-binding positions include Arg163 and 170–172; that span reads MGR. ADP contacts are provided by residues 186 to 188, Lys212, and 214 to 216; these read GCE and KKH. Substrate-binding positions include Glu223, Arg244, and 250–253; that span reads HIQR.

Belongs to the phosphofructokinase type A (PFKA) family. ATP-dependent PFK group I subfamily. Prokaryotic clade 'B1' sub-subfamily. In terms of assembly, homotetramer. Requires Mg(2+) as cofactor.

The protein localises to the cytoplasm. The catalysed reaction is beta-D-fructose 6-phosphate + ATP = beta-D-fructose 1,6-bisphosphate + ADP + H(+). It functions in the pathway carbohydrate degradation; glycolysis; D-glyceraldehyde 3-phosphate and glycerone phosphate from D-glucose: step 3/4. Its activity is regulated as follows. Allosterically activated by ADP and other diphosphonucleosides, and allosterically inhibited by phosphoenolpyruvate. Catalyzes the phosphorylation of D-fructose 6-phosphate to fructose 1,6-bisphosphate by ATP, the first committing step of glycolysis. In Vibrio cholerae serotype O1 (strain ATCC 39315 / El Tor Inaba N16961), this protein is ATP-dependent 6-phosphofructokinase.